A 244-amino-acid chain; its full sequence is tRNA (guanine-N(7)-)-methyltransferase (244 aa).

The segment at 1 to 24 (MTDSHVPHPESPAVEEGEERPHRR) is disordered. Residues E74, E99, D126, and D149 each coordinate S-adenosyl-L-methionine. The active site involves D149. Substrate is bound by residues K153, D185, and 222-225 (TKFE).

It belongs to the class I-like SAM-binding methyltransferase superfamily. TrmB family.

The catalysed reaction is guanosine(46) in tRNA + S-adenosyl-L-methionine = N(7)-methylguanosine(46) in tRNA + S-adenosyl-L-homocysteine. It participates in tRNA modification; N(7)-methylguanine-tRNA biosynthesis. Catalyzes the formation of N(7)-methylguanine at position 46 (m7G46) in tRNA. The protein is tRNA (guanine-N(7)-)-methyltransferase of Pseudomonas syringae pv. syringae (strain B728a).